Here is a 518-residue protein sequence, read N- to C-terminus: Major facilitator superfamily multidrug transporter mfsC (518 aa).

7 helical membrane-spanning segments follow: residues 27-47 (VLLT…SVLF), 65-85 (WVLI…GQLG), 88-108 (FGLE…NVIN), 123-143 (ISGV…SNTF), 152-172 (ALAI…VVGS), 183-203 (IFWL…LFLP), and 212-232 (PIDI…VYGL). Residue N233 is glycosylated (N-linked (GlcNAc...) asparagine). The next 7 helical transmembrane spans lie at 242–262 (SAAM…FLWV), 281–301 (FLVM…WFFI), 315–335 (ILTA…GVFA), 347–367 (ILVA…FAGP), 380–400 (TAII…SILL), 409–429 (AVAG…ILAG), and 455–475 (AFWL…VCYW).

The protein belongs to the major facilitator superfamily. EmrB family.

The protein localises to the membrane. Functionally, major facilitator superfamily transporter that may be involved in A.fumigatus adaptation to azoles such as vorizonazole. This chain is Major facilitator superfamily multidrug transporter mfsC, found in Aspergillus fumigatus (strain ATCC MYA-4609 / CBS 101355 / FGSC A1100 / Af293) (Neosartorya fumigata).